Here is a 571-residue protein sequence, read N- to C-terminus: ATRPKGAVQPKYEDAMQYEFKVNGEPVVLHLEKNKGLFSKDYSEIHYSPDGREITTYPPVEDHCYYHGRIENDADSTASISACNGLKGYFKLQRETYFIEPLKLPDSEAHAVFKYENVEKEDEAPKMCGVTQNWKSYEPIKKASQLAFTAEQQRYDPYKYIEFFVVVDQGTVTKNNGDLDKIKARMYELANIVNEIFRYLYMHVALVGLEIWSNGDKITVKPDVDYTLNSFAEWRKTDLLTRKKHDNAQLLTAIDFNGPTIGYAYIGSMCHPKRSVGIVQDYSPINLVVAVIMAHEMGHNLGIHHDTGSCSCGDYPCIMGPTISNEPSKFFSNCSYIQCWDFIMNHNPECIINEPLGTDIISPPVCGNELLEVGEECDCGTPENCQNECCDAATCKLKSGSQCGHGDCCEQCKFSKSGTECRASMSECDPAEHCTGQSSECPADVFHKNGQPCLDNYGYCYNGNCPIMYHQCYALFGADVYEAEDSCFKDNQKGNYYGYCRKENGKKIPCAPEDVKCGRLYCKDNSPGQNNPCKMFYSNDDEHKGMVLPGTKCADGKVCSNGHCVDVATAY.

Positions 1–150 are excised as a propeptide; sequence ATRPKGAVQP…KKASQLAFTA (150 aa). The residue at position 151 (Glu-151) is a Pyrrolidone carboxylic acid (Glu). In terms of domain architecture, Peptidase M12B spans 159–355; the sequence is KYIEFFVVVD…HNPECIINEP (197 aa). Ca(2+)-binding residues include Glu-162 and Asp-246. Disulfide bonds link Cys-270–Cys-350, Cys-310–Cys-334, and Cys-312–Cys-317. His-295 is a Zn(2+) binding site. The active site involves Glu-296. Residues His-299 and His-305 each coordinate Zn(2+). Residue Asn-333 is glycosylated (N-linked (GlcNAc...) asparagine). Ca(2+) contacts are provided by Cys-350, Asn-353, Val-365, Asn-368, Leu-370, Glu-372, Glu-375, and Asp-378. A Disintegrin domain is found at 363 to 449; that stretch reads PPVCGNELLE…ECPADVFHKN (87 aa). Intrachain disulfides connect Cys-366–Cys-385, Cys-366–Cys-395, Cys-377–Cys-390, Cys-377–Cys-395, Cys-379–Cys-385, Cys-389–Cys-412, Cys-403–Cys-409, Cys-408–Cys-434, Cys-421–Cys-441, Cys-428–Cys-453, Cys-428–Cys-460, Cys-453–Cys-465, Cys-460–Cys-465, Cys-472–Cys-487, Cys-472–Cys-522, Cys-487–Cys-533, Cys-500–Cys-510, Cys-510–Cys-517, Cys-517–Cys-559, Cys-522–Cys-533, Cys-553–Cys-564, and Cys-559–Cys-564. Positions 427–429 match the D/ECD-tripeptide motif; that stretch reads ECD. Residues Asp-429, Pro-430, Glu-432, Asp-444, and Val-445 each contribute to the Ca(2+) site.

This sequence belongs to the venom metalloproteinase (M12B) family. P-III subfamily. P-IIIb sub-subfamily. Monomer (Jararhagin and Jararhagin-C) and dimer (Jaracetin). Zn(2+) is required as a cofactor. The N-terminus of Jararhagin is blocked. As to expression, expressed by the venom gland.

The protein localises to the secreted. The enzyme catalyses Cleavage of 10-His-|-Leu-11, 14-Ala-|-Leu-15, 16-Tyr-|-Leu-17 and 24-Phe-|-Phe-25 bonds in insulin B chain.. Inhibited by EDTA, 1,10 phenanthroline and batimastat (a peptidomimetic MMP inhibitor). In terms of biological role, snake venom zinc metalloproteinase-disintegrin-like jararhagin: causes hemorrhage. This is the result of the degradation of sub-endothelial matrix proteins leading to the disruption of the blood vessel endothelium, with accompanying disturbances in platelet function. It is able to degrade von Willebrand factor (vWF) and it hydrolyzes the alpha-chain of fibrinogen (FGA) while leaving the beta and gamma chains unaffected. It inhibits collagen-induced platelet aggregation through the binding to alpha-2/beta-1 integrin (ITGA2/ITGB1) (collagen receptor), and it cleaves the beta-1 subunit of the same integrin, inhibiting platelet interaction and ultimately causing impairment of signal transduction. It has inability to be affected by the plasma inhibitor alpha(2)-macroglobulin. In fibroblasts, it functions as a collagen-mimetic substrate and, in endothelial cells, it causes apoptosis and indirectly inhibits cell proliferation by release of angiostatin-like compounds. It induces a strong pro-inflammatory response characterized by intense leukocyte accumulation and release of cytokines at the site of the injection. Although hemorrhage and edema are a response to the direct effect of this toxin, jararhagin-induced inflammation and necrosis are dependent on macrophages and key pro-inflammatory cytokines or their receptors. It also possesses anti-tumorgenic properties. Functionally, the monomeric form inhibits collagen- and ADP-induced platelet aggregation, but has no effect on glycoprotein Ib-IX-dependent (GP1BA/GP5/GP9) platelet agglutination. Locally activates the early events of an acute inflammatory response as leukocyte rolling and pro-inflammatory cytokine release. The dimeric form jaracetin may be a dimeric form of jararhagin-C. It binds to von Willebrand factor (VWF) and induces its interaction with GPIbalpha (GP1BA) (via the vWF A1 domain), resulting in platelet aggregation. Also binds the alpha-2 subunit of the alpha-2/beta-1 (ITGA2/ITGB1) integrin. It potently induces platelet aggregation in citrated platelet-rich plasma. This is Zinc metalloproteinase-disintegrin-like jararhagin from Bothrops jararaca (Jararaca).